Reading from the N-terminus, the 60-residue chain is 5-hydroxytryptamine receptor 2B (60 aa).

Over 1 to 4 (VLCP) the chain is Extracellular. Residues 5-26 (AWLFLDVLFSTASIMHLCAISV) traverse the membrane as a helical segment. The ergotamine site is built by Asp10 and Thr15. The DRY motif; important for ligand-induced conformation changes signature appears at 27–29 (DRY). Residues 27–46 (DRYIAIKKPIQANQYNSRAT) are Cytoplasmic-facing. Residues 47–60 (AFIKITVVWLISIG) form a helical membrane-spanning segment.

It belongs to the G-protein coupled receptor 1 family. In terms of assembly, interacts (via C-terminus) with MPDZ. In terms of tissue distribution, detected in aorta, renal artery, jugular vein, vena cava and femoral vein.

It is found in the cell membrane. The protein localises to the synapse. Its subcellular location is the synaptosome. Functionally, G-protein coupled receptor for 5-hydroxytryptamine (serotonin). Also functions as a receptor for various ergot alkaloid derivatives and psychoactive substances. Ligand binding causes a conformation change that triggers signaling via guanine nucleotide-binding proteins (G proteins) and modulates the activity of downstream effectors. HTR2B is coupled to G(q)/G(11) G alpha proteins and activates phospholipase C-beta, releasing diacylglycerol (DAG) and inositol 1,4,5-trisphosphate (IP3) second messengers that modulate the activity of phosphatidylinositol 3-kinase and promote the release of Ca(2+) ions from intracellular stores, respectively. Beta-arrestin family members inhibit signaling via G proteins and mediate activation of alternative signaling pathways. Plays a role in the regulation of dopamine and 5-hydroxytryptamine release, 5-hydroxytryptamine uptake and in the regulation of extracellular dopamine and 5-hydroxytryptamine levels, and thereby affects neural activity. May play a role in the perception of pain. Plays a role in the regulation of behavior, including impulsive behavior. Required for normal proliferation of embryonic cardiac myocytes and normal heart development. Protects cardiomyocytes against apoptosis. Plays a role in the adaptation of pulmonary arteries to chronic hypoxia. Plays a role in vasoconstriction. Required for normal osteoblast function and proliferation, and for maintaining normal bone density. Required for normal proliferation of the interstitial cells of Cajal in the intestine. The protein is 5-hydroxytryptamine receptor 2B (HTR2B) of Sus scrofa (Pig).